Consider the following 297-residue polypeptide: Nucleotide-binding protein Bphyt_0592 (297 aa).

8-15 (GISGSGKS) serves as a coordination point for ATP. A GTP-binding site is contributed by 57 to 60 (DARS).

Belongs to the RapZ-like family.

Its function is as follows. Displays ATPase and GTPase activities. This chain is Nucleotide-binding protein Bphyt_0592, found in Paraburkholderia phytofirmans (strain DSM 17436 / LMG 22146 / PsJN) (Burkholderia phytofirmans).